Reading from the N-terminus, the 596-residue chain is Uptake hydrogenase large subunit (596 aa).

Positions 75, 78, 575, and 578 each coordinate Ni(2+).

Belongs to the [NiFe]/[NiFeSe] hydrogenase large subunit family. In terms of assembly, heterodimer of a large and a small subunit. Requires Ni(2+) as cofactor.

The protein localises to the cell membrane. The catalysed reaction is H2 + A = AH2. Its function is as follows. This enzyme recycles the H(2) produced by nitrogenase to increase the production of ATP and to protect nitrogenase against inhibition or damage by O(2) under carbon- or phosphate-limited conditions. This chain is Uptake hydrogenase large subunit (hupB), found in Rhizobium leguminosarum bv. viciae.